A 350-amino-acid chain; its full sequence is UDP-N-acetylglucosamine--N-acetylmuramyl-(pentapeptide) pyrophosphoryl-undecaprenol N-acetylglucosamine transferase (350 aa).

Residues 9 to 11 (TGG), asparagine 123, arginine 159, serine 181, and glutamine 281 each bind UDP-N-acetyl-alpha-D-glucosamine.

Belongs to the glycosyltransferase 28 family. MurG subfamily.

It localises to the cell inner membrane. The enzyme catalyses di-trans,octa-cis-undecaprenyl diphospho-N-acetyl-alpha-D-muramoyl-L-alanyl-D-glutamyl-meso-2,6-diaminopimeloyl-D-alanyl-D-alanine + UDP-N-acetyl-alpha-D-glucosamine = di-trans,octa-cis-undecaprenyl diphospho-[N-acetyl-alpha-D-glucosaminyl-(1-&gt;4)]-N-acetyl-alpha-D-muramoyl-L-alanyl-D-glutamyl-meso-2,6-diaminopimeloyl-D-alanyl-D-alanine + UDP + H(+). It participates in cell wall biogenesis; peptidoglycan biosynthesis. Cell wall formation. Catalyzes the transfer of a GlcNAc subunit on undecaprenyl-pyrophosphoryl-MurNAc-pentapeptide (lipid intermediate I) to form undecaprenyl-pyrophosphoryl-MurNAc-(pentapeptide)GlcNAc (lipid intermediate II). The protein is UDP-N-acetylglucosamine--N-acetylmuramyl-(pentapeptide) pyrophosphoryl-undecaprenol N-acetylglucosamine transferase of Helicobacter hepaticus (strain ATCC 51449 / 3B1).